The following is a 248-amino-acid chain: Small ribosomal subunit protein uS3 (248 aa).

Residues 38-106 form the KH type-2 domain; the sequence is IREYLEKGLD…MVALNILEVK (69 aa). Residues 214 to 248 are disordered; that stretch reads SELNAPAQGRGRGDRNGRPRRGGQRRQRAQQKQEG. A compositionally biased stretch (basic residues) spans 231–242; it reads RPRRGGQRRQRA.

It belongs to the universal ribosomal protein uS3 family. In terms of assembly, part of the 30S ribosomal subunit. Forms a tight complex with proteins S10 and S14.

In terms of biological role, binds the lower part of the 30S subunit head. Binds mRNA in the 70S ribosome, positioning it for translation. This Corynebacterium aurimucosum (strain ATCC 700975 / DSM 44827 / CIP 107346 / CN-1) (Corynebacterium nigricans) protein is Small ribosomal subunit protein uS3.